The primary structure comprises 424 residues: Nuclear hormone receptor family member nhr-55 (424 aa).

Low complexity predominate over residues 1–19; it reads MNSPSSSSSFCSSSSSPSS. The interval 1 to 20 is disordered; sequence MNSPSSSSSFCSSSSSPSSL. A DNA-binding region (nuclear receptor) is located at residues 25 to 100; the sequence is PDTCQVCGQK…VGMTIENFQF (76 aa). 2 NR C4-type zinc fingers span residues 28–55 and 64–88; these read CQVC…FRRC and CRRN…LKKC. Residues 169 to 424 form the NR LBD domain; sequence EVPLHTPNAL…FSHPEVFIDL (256 aa).

The protein belongs to the nuclear hormone receptor family.

It is found in the nucleus. In terms of biological role, orphan nuclear receptor. The chain is Nuclear hormone receptor family member nhr-55 (nhr-55) from Caenorhabditis elegans.